Here is a 342-residue protein sequence, read N- to C-terminus: Phosphoribosylformylglycinamidine cyclo-ligase (342 aa).

This sequence belongs to the AIR synthase family.

The protein localises to the cytoplasm. The catalysed reaction is 2-formamido-N(1)-(5-O-phospho-beta-D-ribosyl)acetamidine + ATP = 5-amino-1-(5-phospho-beta-D-ribosyl)imidazole + ADP + phosphate + H(+). It functions in the pathway purine metabolism; IMP biosynthesis via de novo pathway; 5-amino-1-(5-phospho-D-ribosyl)imidazole from N(2)-formyl-N(1)-(5-phospho-D-ribosyl)glycinamide: step 2/2. The polypeptide is Phosphoribosylformylglycinamidine cyclo-ligase (Staphylococcus saprophyticus subsp. saprophyticus (strain ATCC 15305 / DSM 20229 / NCIMB 8711 / NCTC 7292 / S-41)).